The primary structure comprises 337 residues: Alcohol dehydrogenase 1 (337 aa).

Positions 37, 58, 89, 92, 95, 103, and 145 each coordinate Zn(2+).

The protein belongs to the zinc-containing alcohol dehydrogenase family. Multimeric (with different ratios of monomers). Zn(2+) is required as a cofactor.

The enzyme catalyses a primary alcohol + NAD(+) = an aldehyde + NADH + H(+). It carries out the reaction a secondary alcohol + NAD(+) = a ketone + NADH + H(+). It participates in alcohol metabolism; ethanol biosynthesis via fermentation pathway. With respect to regulation, inhibited by ethanol. This chain is Alcohol dehydrogenase 1 (adhA), found in Zymomonas mobilis subsp. mobilis (strain ATCC 31821 / ZM4 / CP4).